Here is a 351-residue protein sequence, read N- to C-terminus: Ribosomal RNA small subunit methyltransferase H (351 aa).

S-adenosyl-L-methionine contacts are provided by residues 48 to 50, Asp67, Phe94, Asp115, and Gln122; that span reads GGY. The tract at residues 274–351 is disordered; sequence AAQASRHVPG…PAPQGRGPRR (78 aa).

The protein belongs to the methyltransferase superfamily. RsmH family.

The protein localises to the cytoplasm. The catalysed reaction is cytidine(1402) in 16S rRNA + S-adenosyl-L-methionine = N(4)-methylcytidine(1402) in 16S rRNA + S-adenosyl-L-homocysteine + H(+). In terms of biological role, specifically methylates the N4 position of cytidine in position 1402 (C1402) of 16S rRNA. This Methylorubrum extorquens (strain PA1) (Methylobacterium extorquens) protein is Ribosomal RNA small subunit methyltransferase H.